A 944-amino-acid polypeptide reads, in one-letter code: ATP-dependent RNA helicase DDX42 (944 aa).

Residues 1 to 18 (MNWNKGGPGTKRGFGFGG) show a composition bias toward gly residues. Disordered regions lie at residues 1-119 (MNWN…LEAF), 131-155 (MKRLEDKDKEKKNAKGIRDDIEEED), and 182-203 (EYDSDGNPIAPSKKIIDPLPPI). Positions 35–52 (SHSAFGTAGSSAAFAKSG) are enriched in low complexity. Positions 70–84 (DEENAYFEDEEEDNS) are enriched in acidic residues. Residues 120–157 (MAEVEDQAARDMKRLEDKDKEKKNAKGIRDDIEEEDDQ) are a coiled coil. The span at 131–149 (MKRLEDKDKEKKNAKGIRD) shows a compositional bias: basic and acidic residues. A Q motif motif is present at residues 253–281 (SSFARFGFDEQLMHQIRKSEYTQPTPIQC). The region spanning 284–459 (VPVAMSGRDM…RDILIDPIRV (176 aa)) is the Helicase ATP-binding domain. 297–304 (AKTGSGKT) lines the ATP pocket. Positions 407–410 (DEAD) match the DEAD box motif. In terms of domain architecture, Helicase C-terminal spans 487-632 (WLTRRLVEFT…HVSKELLDLA (146 aa)). 3 disordered regions span residues 642–682 (RFKG…VMSN), 723–753 (GSSAAGASGWTSAGSLNSVPTSSAQQNAANP), and 794–944 (SANA…RWDS). Residues 723–737 (GSSAAGASGWTSAGS) are compositionally biased toward low complexity. Polar residues predominate over residues 738–752 (LNSVPTSSAQQNAAN). Residues 794–814 (SANASAGNREGVGSAGSAPRG) are compositionally biased toward low complexity. Residues 815–824 (GSSGGGGGGI) are compositionally biased toward gly residues. 2 stretches are compositionally biased toward basic and acidic residues: residues 825–887 (VRER…RHFT) and 901–926 (NISEGRSNESRNGENRKDANSRDNKT).

This sequence belongs to the DEAD box helicase family. DDX42 subfamily. As to quaternary structure, transient component of the SF3B subcomplex of the 17S U2 SnRNP complex.

The protein resides in the cytoplasm. It is found in the nucleus. It catalyses the reaction ATP + H2O = ADP + phosphate + H(+). Its function is as follows. ATP-dependent RNA helicase that binds to partially double-stranded RNAs (dsRNAs) in order to unwind RNA secondary structures. Unwinding is promoted in the presence of single-strand binding proteins. Also mediates RNA duplex formation thereby displacing the single-strand RNA binding protein. ATP and ADP modulate its activity: ATP binding and hydrolysis by DDX42 triggers RNA strand separation, whereas the ADP-bound form of the protein triggers annealing of complementary RNA strands. Required for assembly of the 17S U2 SnRNP complex of the spliceosome, a large ribonucleoprotein complex that removes introns from transcribed pre-mRNAs: DDX42 associates transiently with the SF3B subcomplex of the 17S U2 SnRNP complex and is released after fulfilling its role in the assembly of 17S U2 SnRNP. The sequence is that of ATP-dependent RNA helicase DDX42 (DDX42) from Gallus gallus (Chicken).